Here is a 253-residue protein sequence, read N- to C-terminus: REF/SRPP-like protein Os05g0151300/LOC_Os05g05940 (253 aa).

The tract at residues 1-26 (MADSGSDAPISNRPEEEVTVEKTPEM) is disordered. Residues 13 to 26 (RPEEEVTVEKTPEM) are compositionally biased toward basic and acidic residues.

It belongs to the REF/SRPP family.

The polypeptide is REF/SRPP-like protein Os05g0151300/LOC_Os05g05940 (Oryza sativa subsp. japonica (Rice)).